Reading from the N-terminus, the 102-residue chain is uncharacterized protein (102 aa).

3 helical membrane-spanning segments follow: residues I14–A34, V35–I55, and I76–I96.

Its subcellular location is the cell membrane. This is an uncharacterized protein from Methanocaldococcus jannaschii (strain ATCC 43067 / DSM 2661 / JAL-1 / JCM 10045 / NBRC 100440) (Methanococcus jannaschii).